Consider the following 616-residue polypeptide: Dihydroxy-acid dehydratase (616 aa).

Asp81 contributes to the Mg(2+) binding site. Residue Cys122 coordinates [2Fe-2S] cluster. Residues Asp123 and Lys124 each contribute to the Mg(2+) site. Lys124 carries the post-translational modification N6-carboxylysine. Cys195 contacts [2Fe-2S] cluster. Glu491 serves as a coordination point for Mg(2+). The Proton acceptor role is filled by Ser517.

This sequence belongs to the IlvD/Edd family. Homodimer. [2Fe-2S] cluster serves as cofactor. It depends on Mg(2+) as a cofactor.

It catalyses the reaction (2R)-2,3-dihydroxy-3-methylbutanoate = 3-methyl-2-oxobutanoate + H2O. It carries out the reaction (2R,3R)-2,3-dihydroxy-3-methylpentanoate = (S)-3-methyl-2-oxopentanoate + H2O. It participates in amino-acid biosynthesis; L-isoleucine biosynthesis; L-isoleucine from 2-oxobutanoate: step 3/4. It functions in the pathway amino-acid biosynthesis; L-valine biosynthesis; L-valine from pyruvate: step 3/4. Functionally, functions in the biosynthesis of branched-chain amino acids. Catalyzes the dehydration of (2R,3R)-2,3-dihydroxy-3-methylpentanoate (2,3-dihydroxy-3-methylvalerate) into 2-oxo-3-methylpentanoate (2-oxo-3-methylvalerate) and of (2R)-2,3-dihydroxy-3-methylbutanoate (2,3-dihydroxyisovalerate) into 2-oxo-3-methylbutanoate (2-oxoisovalerate), the penultimate precursor to L-isoleucine and L-valine, respectively. This is Dihydroxy-acid dehydratase from Salmonella agona (strain SL483).